We begin with the raw amino-acid sequence, 418 residues long: Putative competence-damage inducible protein (418 aa).

It belongs to the CinA family.

This chain is Putative competence-damage inducible protein, found in Clostridioides difficile (strain 630) (Peptoclostridium difficile).